We begin with the raw amino-acid sequence, 403 residues long: UPF0284 protein PMT_1350 (403 aa).

This sequence belongs to the UPF0284 family.

The protein is UPF0284 protein PMT_1350 of Prochlorococcus marinus (strain MIT 9313).